Here is a 506-residue protein sequence, read N- to C-terminus: Exopolyphosphatase (506 aa).

The protein belongs to the GppA/Ppx family. As to quaternary structure, homodimer. Mg(2+) serves as cofactor.

It localises to the cell membrane. The catalysed reaction is [phosphate](n) + H2O = [phosphate](n-1) + phosphate + H(+). It catalyses the reaction [phosphate](n) + ATP = [phosphate](n+1) + ADP. Its activity is regulated as follows. Exopolyphosphatase activity is stimulated by NH(4)(+) and K(+). Phosphotransferase activity is insensitive to the addition of K(+) or NH(4)(+) ions. In terms of biological role, degradation of inorganic polyphosphates (polyP). Releases orthophosphate processively from the ends of the polyP chain. Also has polyphosphate:ADP phosphotransferase activity, catalyzing the production of ATP from ADP and polyP. This is Exopolyphosphatase from Pseudomonas aeruginosa (strain ATCC 15692 / DSM 22644 / CIP 104116 / JCM 14847 / LMG 12228 / 1C / PRS 101 / PAO1).